We begin with the raw amino-acid sequence, 735 residues long: ATP-dependent DNA helicase Hel308 (735 aa).

ATP contacts are provided by residues Gln32 and 50 to 57 (APTGSGKT). One can recognise a Helicase ATP-binding domain in the interval 37–201 (QAGVEKGENL…WIGGKIVESS (165 aa)). The DEAH box signature appears at 146 to 149 (DEIH). A Helicase C-terminal domain is found at 235-431 (DLDLAAEAIE…GLRGLRHFIL (197 aa)).

It belongs to the helicase family. Hel308 subfamily. As to quaternary structure, monomer.

The catalysed reaction is Couples ATP hydrolysis with the unwinding of duplex DNA by translocating in the 3'-5' direction.. The enzyme catalyses ATP + H2O = ADP + phosphate + H(+). Functionally, DNA-dependent ATPase and 3'-5' DNA helicase that may be involved in repair of stalled replication forks. This is ATP-dependent DNA helicase Hel308 from Aeropyrum pernix (strain ATCC 700893 / DSM 11879 / JCM 9820 / NBRC 100138 / K1).